Here is a 399-residue protein sequence, read N- to C-terminus: Long-chain primary alcohol dehydrogenase AdhA (399 aa).

It belongs to the iron-containing alcohol dehydrogenase family. In terms of assembly, homotetramer. The cofactor is Zn(2+).

The enzyme catalyses a primary alcohol + NADP(+) = an aldehyde + NADPH + H(+). Functionally, alcohol dehydrogenase active against primary long-chain alcohols. Pentan-1-ol is the optimum substrate in vitro, but also shows efficient dehydrogenase activity on propanol, hexanol, and ethanol. This is Long-chain primary alcohol dehydrogenase AdhA (adhA) from Thermoanaerobacter ethanolicus (Clostridium thermohydrosulfuricum).